Here is a 135-residue protein sequence, read N- to C-terminus: HTH-type transcriptional activator AarP (135 aa).

Positions 22-120 (SEILVWIEGN…GISPSLYRLS (99 aa)) constitute an HTH araC/xylS-type domain. 2 DNA-binding regions (H-T-H motif) span residues 39 to 60 (DDIA…RKIV) and 87 to 110 (VIDI…KAYL).

Functionally, transcriptional activator of 2'-N-acetyltransferase. This is HTH-type transcriptional activator AarP (aarP) from Providencia stuartii.